Here is a 243-residue protein sequence, read N- to C-terminus: BTB/POZ domain-containing protein At4g08455 (243 aa).

Residues lysine 19–serine 51 are a coiled coil. The BTB domain occupies threonine 64–glutamate 136.

Interacts with CUL3A and CUL3B.

It participates in protein modification; protein ubiquitination. In terms of biological role, may act as a substrate-specific adapter of an E3 ubiquitin-protein ligase complex (CUL3-RBX1-BTB) which mediates the ubiquitination and subsequent proteasomal degradation of target proteins. The sequence is that of BTB/POZ domain-containing protein At4g08455 from Arabidopsis thaliana (Mouse-ear cress).